Reading from the N-terminus, the 223-residue chain is Holliday junction branch migration complex subunit RuvA (223 aa).

Residues 1 to 64 (MIGKLTGRLD…EDLLQLFGFL (64 aa)) form a domain I region. Positions 65 to 143 (SPYEKEWHRL…AVMAMGGTLD (79 aa)) are domain II. The flexible linker stretch occupies residues 144–171 (DAMDDVVDDMPGESAAPAPAPQPRAPKR). The disordered stretch occupies residues 148–177 (DVVDDMPGESAAPAPAPQPRAPKRPASNAQ). The tract at residues 172–223 (PASNAQAEALSALQNLGYGPSDAAQAVAQAAESASNTPELIRAALRLLAPKE) is domain III.

The protein belongs to the RuvA family. In terms of assembly, homotetramer. Forms an RuvA(8)-RuvB(12)-Holliday junction (HJ) complex. HJ DNA is sandwiched between 2 RuvA tetramers; dsDNA enters through RuvA and exits via RuvB. An RuvB hexamer assembles on each DNA strand where it exits the tetramer. Each RuvB hexamer is contacted by two RuvA subunits (via domain III) on 2 adjacent RuvB subunits; this complex drives branch migration. In the full resolvosome a probable DNA-RuvA(4)-RuvB(12)-RuvC(2) complex forms which resolves the HJ.

Its subcellular location is the cytoplasm. Its function is as follows. The RuvA-RuvB-RuvC complex processes Holliday junction (HJ) DNA during genetic recombination and DNA repair, while the RuvA-RuvB complex plays an important role in the rescue of blocked DNA replication forks via replication fork reversal (RFR). RuvA specifically binds to HJ cruciform DNA, conferring on it an open structure. The RuvB hexamer acts as an ATP-dependent pump, pulling dsDNA into and through the RuvAB complex. HJ branch migration allows RuvC to scan DNA until it finds its consensus sequence, where it cleaves and resolves the cruciform DNA. The sequence is that of Holliday junction branch migration complex subunit RuvA from Jannaschia sp. (strain CCS1).